The primary structure comprises 406 residues: Sprouty-related, EVH1 domain-containing protein 1 (406 aa).

The region spanning 3 to 120 (GEQEPDDSYA…RGIRRAIEDL (118 aa)) is the WH1 domain. A disordered region spans residues 124-154 (LPASCHGESETSEDGPQVNKEDHYSTHNNDH). The span at 142-154 (NKEDHYSTHNNDH) shows a compositional bias: basic and acidic residues. A KBD domain is found at 195-247 (PIRHVSFQDEDEIVRINPRDMIIRRYADYRHPDIFRNDVDREEPEDVTFFTKT). Residues 296–404 (SCVYCQERFN…CGCCGGKHKA (109 aa)) form the SPR domain.

Post-translationally, palmitoylated by ZDHHC17/HIP14. Ubiquitinated. In terms of processing, phosphorylated on tyrosine.

The protein resides in the cell membrane. Tyrosine kinase substrate that inhibits growth-factor-mediated activation of MAP kinase. This Xenopus tropicalis (Western clawed frog) protein is Sprouty-related, EVH1 domain-containing protein 1 (spred1).